Here is a 248-residue protein sequence, read N- to C-terminus: Aspartate/glutamate leucyltransferase (248 aa).

It belongs to the R-transferase family. Bpt subfamily.

The protein resides in the cytoplasm. The catalysed reaction is N-terminal L-glutamyl-[protein] + L-leucyl-tRNA(Leu) = N-terminal L-leucyl-L-glutamyl-[protein] + tRNA(Leu) + H(+). It carries out the reaction N-terminal L-aspartyl-[protein] + L-leucyl-tRNA(Leu) = N-terminal L-leucyl-L-aspartyl-[protein] + tRNA(Leu) + H(+). In terms of biological role, functions in the N-end rule pathway of protein degradation where it conjugates Leu from its aminoacyl-tRNA to the N-termini of proteins containing an N-terminal aspartate or glutamate. This is Aspartate/glutamate leucyltransferase from Methylorubrum populi (strain ATCC BAA-705 / NCIMB 13946 / BJ001) (Methylobacterium populi).